We begin with the raw amino-acid sequence, 150 residues long: Large ribosomal subunit protein bL9 (150 aa).

This sequence belongs to the bacterial ribosomal protein bL9 family.

Its function is as follows. Binds to the 23S rRNA. This chain is Large ribosomal subunit protein bL9, found in Mycoplasma genitalium (strain ATCC 33530 / DSM 19775 / NCTC 10195 / G37) (Mycoplasmoides genitalium).